A 130-amino-acid polypeptide reads, in one-letter code: Large ribosomal subunit protein eL22 (130 aa).

This sequence belongs to the eukaryotic ribosomal protein eL22 family.

This Caenorhabditis elegans protein is Large ribosomal subunit protein eL22 (rpl-22).